Consider the following 486-residue polypeptide: Scarecrow-like protein 15 (486 aa).

A disordered region spans residues 1-28; sequence MKIPASSPQDTTNNNNNTNSTDSNHLSM. The segment covering 10-24 has biased composition (low complexity); it reads DTTNNNNNTNSTDSN. Residues 113 to 485 enclose the GRAS domain; the sequence is DSVDNGGFDF…RALVATSAWR (373 aa). The interval 120 to 179 is leucine repeat I (LRI); the sequence is FDFIEDLIRVVDCVESDELQLAQVVLSRLNQRLRSPAGRPLQRAAFYFKEALGSFLTGSN. The interval 198-266 is VHIID; the sequence is IKEYSGISPI…VSGGFLRVTA (69 aa). The VHIID signature appears at 232–236; sequence VHVVD. The segment at 278–310 is leucine repeat II (LRII); that stretch reads LVKENLTQFAAEMKIRFQIEFVLMKTFEMLSFK. The PFYRE stretch occupies residues 320 to 410; that stretch reads TVVLISPAIF…AFVLRPKISA (91 aa). Positions 413–485 are SAW; that stretch reads ETAADRRHTG…RALVATSAWR (73 aa).

Belongs to the GRAS family. In terms of tissue distribution, expressed in seedlings, roots, leaves and flowers.

It is found in the nucleus. Functionally, probable transcription factor involved in plant development. This is Scarecrow-like protein 15 (SCL15) from Arabidopsis thaliana (Mouse-ear cress).